The primary structure comprises 375 residues: Coproporphyrin III ferrochelatase (375 aa).

Residues S59 and Y128 each contribute to the Fe-coproporphyrin III site. Residues H191 and E286 each contribute to the Fe(2+) site.

It belongs to the ferrochelatase family.

It is found in the cytoplasm. The enzyme catalyses Fe-coproporphyrin III + 2 H(+) = coproporphyrin III + Fe(2+). It participates in porphyrin-containing compound metabolism; protoheme biosynthesis. Involved in coproporphyrin-dependent heme b biosynthesis. Catalyzes the insertion of ferrous iron into coproporphyrin III to form Fe-coproporphyrin III. The sequence is that of Coproporphyrin III ferrochelatase from Streptomyces coelicolor (strain ATCC BAA-471 / A3(2) / M145).